Reading from the N-terminus, the 193-residue chain is Mediator of RNA polymerase II transcription subunit 20 (193 aa).

Belongs to the Mediator complex subunit 20 family. In terms of assembly, component of the Mediator complex.

Its subcellular location is the nucleus. In terms of biological role, component of the Mediator complex, a coactivator involved in the regulated transcription of nearly all RNA polymerase II-dependent genes. Mediator functions as a bridge to convey information from gene-specific regulatory proteins to the basal RNA polymerase II transcription machinery. The Mediator complex, having a compact conformation in its free form, is recruited to promoters by direct interactions with regulatory proteins and serves for the assembly of a functional preinitiation complex with RNA polymerase II and the general transcription factors. This is Mediator of RNA polymerase II transcription subunit 20 (med20) from Schizosaccharomyces pombe (strain 972 / ATCC 24843) (Fission yeast).